Here is a 232-residue protein sequence, read N- to C-terminus: Thiamine import ATP-binding protein ThiQ (232 aa).

Residues 2-230 form the ABC transporter domain; the sequence is LKLTDITWLY…KASASALLGI (229 aa). Position 32–39 (32–39) interacts with ATP; the sequence is GPSGAGKS.

It belongs to the ABC transporter superfamily. Thiamine importer (TC 3.A.1.19.1) family. The complex is composed of two ATP-binding proteins (ThiQ), two transmembrane proteins (ThiP) and a solute-binding protein (ThiB).

The protein resides in the cell inner membrane. The catalysed reaction is thiamine(out) + ATP + H2O = thiamine(in) + ADP + phosphate + H(+). In terms of biological role, part of the ABC transporter complex ThiBPQ involved in thiamine import. Responsible for energy coupling to the transport system. The sequence is that of Thiamine import ATP-binding protein ThiQ from Escherichia coli (strain UTI89 / UPEC).